Here is a 313-residue protein sequence, read N- to C-terminus: Protein sprouty homolog 2 (313 aa).

Residues 1 to 14 (METRVQHGSGSQAL) show a composition bias toward polar residues. 2 disordered regions span residues 1–31 (METRVQHGSGSQALLQARRDSGRPHGEPDLR) and 54–146 (EYTE…VADG). Basic and acidic residues-rich tracts occupy residues 17-31 (ARRDSGRPHGEPDLR) and 78-89 (KSERPHGLPEHR). The span at 108–131 (SRSISTVSTGSRSSTRTSTSSNSS) shows a compositional bias: low complexity. The span at 132-141 (EQRLLGSSSG) shows a compositional bias: polar residues. An SPR domain is found at 175-289 (RCEDCGKCKC…CYDRVNRPGC (115 aa)).

It belongs to the sprouty family. As to expression, brain and interlimb region.

The protein resides in the cytoplasm. It localises to the membrane. In terms of biological role, acts as an antagonist of FGF-induced retinal lens fiber differentiation. Inhibits TGFB-induced epithelial-to-mesenchymal transition in retinal lens epithelial cells. May play an important role in FGF-mediated patterning of the mid/hindbrain region by acting to modulate the signaling effects of FGF8. The chain is Protein sprouty homolog 2 (SPRY2) from Gallus gallus (Chicken).